Consider the following 221-residue polypeptide: MLSRAGKVVCIGRNYAAHIRELNNPFPTKPFFFLKPTSAIVEPGHGNLIIPPDVSAHYEVELGLIMKDRLPARRPVSSNSWLDSIGAYFVGIDMTARNIQNEAKKKGLPWSFAKGYDTFLPVGPIIPKHLIPDPHNVILELSLNGKVVQKDSTSLMLNKIPKIFSSITEAMSLNPGDLVLTGTPKGVGPVVPGDILSARLLTAQEQEIIPSKFEIKAEKCD.

Mg(2+)-binding residues include Glu59, Glu61, and Asp93.

This sequence belongs to the FAH family. Mg(2+) is required as a cofactor. Mn(2+) serves as cofactor.

It is found in the mitochondrion. The protein resides in the cytoplasm. It carries out the reaction oxaloacetate = enol-oxaloacetate. In terms of biological role, tautomerase that converts enol-oxaloacetate, a strong inhibitor of succinate dehydrogenase, to the physiological keto form of oxaloacetate. The protein is Oxaloacetate tautomerase oaa1, mitochondrial of Schizosaccharomyces pombe (strain 972 / ATCC 24843) (Fission yeast).